Reading from the N-terminus, the 105-residue chain is uncharacterized protein (105 aa).

Residues 47 to 105 (ENASAPRIQPSVTPSPAAPPSTDQLMMEKMMGSAGLNKYRKQEKEKQEEDGNGESLFDF) form a disordered region. Positions 86–95 (RKQEKEKQEE) are enriched in basic and acidic residues.

This is an uncharacterized protein from Bacillus subtilis (strain 168).